A 1161-amino-acid polypeptide reads, in one-letter code: Type IV pilus biogenesis factor PilY1 (1161 aa).

Residues 1–30 (MKSVLHQIGKTSLAAALSGAVLLSAQTTHA) form the signal peptide. Positions 598, 600, 602, and 606 each coordinate Ca(2+). Residues 617–619 (RGD) form an integrin-binding motif RGD region. Aspartate 849, asparagine 851, aspartate 853, valine 855, and aspartate 857 together coordinate Ca(2+). Positions 1136-1161 (SGECLTVNPGPNTRGRQNWRPIEGKN) are disordered.

Belongs to the PilY1 family. Interacts (via C-terminus) with host integrins alpha-V/beta-3 (ITGAV/ITGB3) and alpha-V/beta-5 (ITGAV/ITGB5).

The protein localises to the fimbrium. It localises to the membrane. It is found in the cytoplasm. The protein resides in the cytosol. Its function is as follows. Involved in pilus assembly, twitching motility and adhesion to host cells. Primes type IV pili (T4P) assembly and is required for inclusion of minor pilins PilV, PilW and PilX to the surface pili. Stabilizes assembled pilus fibers likely by antagonizing retraction mediated by PilT. Calcium-binding and calcium release by PilY1 seem to be essential for twitching motility and for regulation of pilus retraction dynamics of PilT. The sequence is that of Type IV pilus biogenesis factor PilY1 from Pseudomonas aeruginosa (strain ATCC 15692 / DSM 22644 / CIP 104116 / JCM 14847 / LMG 12228 / 1C / PRS 101 / PAO1).